The following is a 61-amino-acid chain: Conotoxin Am14.1 (61 aa).

2 propeptides span residues 1 to 19 (MLSV…HLPR) and 52 to 61 (KRDLDLFTDQ).

Post-translationally, mostly non-hydroxylated. In terms of processing, contains 2 disulfide bonds. As to expression, expressed by the venom duct.

It localises to the secreted. Its function is as follows. Probable toxin that inhibits ion channels. The protein is Conotoxin Am14.1 of Conus amadis (Amadis cone).